Here is a 346-residue protein sequence, read N- to C-terminus: Protein FAF1 (346 aa).

Disordered regions lie at residues 22 to 120 (QFGS…LRSG) and 323 to 346 (KRDI…KSRR). Basic and acidic residues predominate over residues 31 to 65 (FEDKTKNIRTEVDTRDSSGDEIDNSDHGSDFKDGT). The span at 72 to 85 (SDEDSGNETAEENN) shows a compositional bias: acidic residues.

Interacts with KRR1.

Its subcellular location is the nucleus. The protein localises to the nucleolus. In terms of biological role, required for pre-rRNA processing and 40S ribosomal subunit assembly. Seems to act in the processing of 35S rRNA at the A(0), A(1), and A(2) cleavage sites. This is Protein FAF1 (FAF1) from Saccharomyces cerevisiae (strain ATCC 204508 / S288c) (Baker's yeast).